The sequence spans 85 residues: Cell division protein ZapA (85 aa).

Positions 59 to 85 form a coiled coil; it reads TAVNVVHDYMKLQEKYEILERQLKEKE.

It belongs to the ZapA family. Type 2 subfamily. Homodimer. Interacts with FtsZ.

Its subcellular location is the cytoplasm. Activator of cell division through the inhibition of FtsZ GTPase activity, therefore promoting FtsZ assembly into bundles of protofilaments necessary for the formation of the division Z ring. It is recruited early at mid-cell but it is not essential for cell division. The chain is Cell division protein ZapA from Bacillus velezensis (strain DSM 23117 / BGSC 10A6 / LMG 26770 / FZB42) (Bacillus amyloliquefaciens subsp. plantarum).